We begin with the raw amino-acid sequence, 218 residues long: Large ribosomal subunit protein uL3 (218 aa).

The tract at residues 127 to 167 is disordered; sequence GFSRGPMSHGSKNHREPGSTGAGTTPGRIYPGKRMAGRYGG.

Belongs to the universal ribosomal protein uL3 family. In terms of assembly, part of the 50S ribosomal subunit. Forms a cluster with proteins L14 and L19.

One of the primary rRNA binding proteins, it binds directly near the 3'-end of the 23S rRNA, where it nucleates assembly of the 50S subunit. This Prochlorococcus marinus (strain MIT 9303) protein is Large ribosomal subunit protein uL3.